A 141-amino-acid chain; its full sequence is Large ribosomal subunit protein uL16c (141 aa).

Positions 1-17 (MLSPRRTKYRKQHRGRL) are enriched in basic residues. A disordered region spans residues 1-20 (MLSPRRTKYRKQHRGRLKGT).

It belongs to the universal ribosomal protein uL16 family. As to quaternary structure, part of the 50S ribosomal subunit.

The protein localises to the plastid. The protein resides in the chloroplast. The polypeptide is Large ribosomal subunit protein uL16c (Staurastrum punctulatum (Green alga)).